Here is a 320-residue protein sequence, read N- to C-terminus: Porphobilinogen deaminase (320 aa).

An S-(dipyrrolylmethanemethyl)cysteine modification is found at C248.

The protein belongs to the HMBS family. In terms of assembly, monomer. Dipyrromethane serves as cofactor.

It catalyses the reaction 4 porphobilinogen + H2O = hydroxymethylbilane + 4 NH4(+). It functions in the pathway porphyrin-containing compound metabolism; protoporphyrin-IX biosynthesis; coproporphyrinogen-III from 5-aminolevulinate: step 2/4. It participates in porphyrin-containing compound metabolism; chlorophyll biosynthesis. Tetrapolymerization of the monopyrrole PBG into the hydroxymethylbilane pre-uroporphyrinogen in several discrete steps. The sequence is that of Porphobilinogen deaminase from Synechococcus elongatus (strain ATCC 33912 / PCC 7942 / FACHB-805) (Anacystis nidulans R2).